We begin with the raw amino-acid sequence, 131 residues long: RxLR effector protein 62 (131 aa).

The signal sequence occupies residues 1–19 (MRLDILLFTLSSSTSLALS). Residues 49-60 (RHLREEPANEAR) carry the RxLR-dEER motif. N-linked (GlcNAc...) asparagine glycosylation occurs at Asn61.

It belongs to the RxLR effector family.

Its subcellular location is the secreted. The protein resides in the host cell. In terms of biological role, secreted effector that suppresses callose deposition, a hallmark of pathogen-associated molecular pattern (PAMP)-triggered immunity (PTI) and renders host plants more susceptible to bacterial infection. Reduces host plant responsiveness to salicylic acid (SA) in haustoriated cells into which host-translocated effectors are delivered. In Hyaloperonospora arabidopsidis (strain Emoy2) (Downy mildew agent), this protein is RxLR effector protein 62.